We begin with the raw amino-acid sequence, 581 residues long: Adenine deaminase (581 aa).

It belongs to the metallo-dependent hydrolases superfamily. Adenine deaminase family. It depends on Mn(2+) as a cofactor.

It carries out the reaction adenine + H2O + H(+) = hypoxanthine + NH4(+). The chain is Adenine deaminase from Clostridium botulinum (strain Eklund 17B / Type B).